A 345-amino-acid polypeptide reads, in one-letter code: Protein RecA (345 aa).

G80–T87 is an ATP binding site.

It belongs to the RecA family.

The protein resides in the cytoplasm. In terms of biological role, can catalyze the hydrolysis of ATP in the presence of single-stranded DNA, the ATP-dependent uptake of single-stranded DNA by duplex DNA, and the ATP-dependent hybridization of homologous single-stranded DNAs. It interacts with LexA causing its activation and leading to its autocatalytic cleavage. This Mycoplasma mycoides subsp. mycoides SC (strain CCUG 32753 / NCTC 10114 / PG1) protein is Protein RecA.